The chain runs to 59 residues: Embryonic testis differentiation protein (59 aa).

The interval 1-28 (MDEKNPEAVPRPPEQNTELVPPKKSKSK) is disordered.

Specifically expressed in testis.

The protein is Embryonic testis differentiation protein of Mus musculus (Mouse).